Reading from the N-terminus, the 679-residue chain is Glycine--tRNA ligase beta subunit (679 aa).

It belongs to the class-II aminoacyl-tRNA synthetase family. Tetramer of two alpha and two beta subunits.

The protein resides in the cytoplasm. The enzyme catalyses tRNA(Gly) + glycine + ATP = glycyl-tRNA(Gly) + AMP + diphosphate. This chain is Glycine--tRNA ligase beta subunit, found in Streptococcus pyogenes serotype M3 (strain ATCC BAA-595 / MGAS315).